We begin with the raw amino-acid sequence, 179 residues long: ATP synthase subunit delta (179 aa).

This sequence belongs to the ATPase delta chain family. In terms of assembly, F-type ATPases have 2 components, F(1) - the catalytic core - and F(0) - the membrane proton channel. F(1) has five subunits: alpha(3), beta(3), gamma(1), delta(1), epsilon(1). F(0) has three main subunits: a(1), b(2) and c(10-14). The alpha and beta chains form an alternating ring which encloses part of the gamma chain. F(1) is attached to F(0) by a central stalk formed by the gamma and epsilon chains, while a peripheral stalk is formed by the delta and b chains.

It localises to the cell membrane. Functionally, f(1)F(0) ATP synthase produces ATP from ADP in the presence of a proton or sodium gradient. F-type ATPases consist of two structural domains, F(1) containing the extramembraneous catalytic core and F(0) containing the membrane proton channel, linked together by a central stalk and a peripheral stalk. During catalysis, ATP synthesis in the catalytic domain of F(1) is coupled via a rotary mechanism of the central stalk subunits to proton translocation. In terms of biological role, this protein is part of the stalk that links CF(0) to CF(1). It either transmits conformational changes from CF(0) to CF(1) or is implicated in proton conduction. The polypeptide is ATP synthase subunit delta (Listeria monocytogenes serovar 1/2a (strain ATCC BAA-679 / EGD-e)).